A 344-amino-acid polypeptide reads, in one-letter code: Prickle-like protein 4 (344 aa).

The 81-residue stretch at 1–81 (MSPQGPAVLS…ARLVLPKLEG (81 aa)) folds into the PET domain. LIM zinc-binding domains are found at residues 82–147 (HTCE…LLRP) and 148–207 (RCPA…RYSD). The segment at 253-344 (GSSLQTQRGL…NASKTHCTMC (92 aa)) is disordered. Polar residues predominate over residues 257 to 271 (QTQRGLPGSSPQQEN). Residues 272–296 (RPGDKAEAPKGQEQCRLETIRDPKD) are compositionally biased toward basic and acidic residues. The span at 322 to 344 (SWKTPGSLQAEDSNASKTHCTMC) shows a compositional bias: polar residues.

It belongs to the prickle / espinas / testin family. Expressed in a broad range of normal tissues as well as in hepatocellular carcinoma, breast cancer and prostate cancer tissues.

This is Prickle-like protein 4 (PRICKLE4) from Homo sapiens (Human).